The following is a 366-amino-acid chain: Methylthioribose-1-phosphate isomerase (366 aa).

Residue Asp-260 is the Proton donor of the active site.

It belongs to the eIF-2B alpha/beta/delta subunits family. MtnA subfamily.

Its subcellular location is the cytoplasm. It is found in the nucleus. The enzyme catalyses 5-(methylsulfanyl)-alpha-D-ribose 1-phosphate = 5-(methylsulfanyl)-D-ribulose 1-phosphate. The protein operates within amino-acid biosynthesis; L-methionine biosynthesis via salvage pathway; L-methionine from S-methyl-5-thio-alpha-D-ribose 1-phosphate: step 1/6. Catalyzes the interconversion of methylthioribose-1-phosphate (MTR-1-P) into methylthioribulose-1-phosphate (MTRu-1-P). The sequence is that of Methylthioribose-1-phosphate isomerase from Caenorhabditis briggsae.